The chain runs to 132 residues: S-protein homolog 19 (132 aa).

The N-terminal stretch at 1 to 26 is a signal peptide; the sequence is MSGSLAFHIIMSVTFMVFFFGGLCEA. The N-linked (GlcNAc...) asparagine glycan is linked to Asn-87.

Belongs to the plant self-incompatibility (S1) protein family.

It localises to the secreted. The chain is S-protein homolog 19 from Arabidopsis thaliana (Mouse-ear cress).